The following is a 324-amino-acid chain: Putative transport protein TM_1187 (324 aa).

A run of 8 helical transmembrane segments spans residues 12–32 (LYLV…TALI), 62–82 (ISNV…FPVI), 105–125 (IPGW…EGAL), 131–151 (IVGY…TAFI), 190–210 (GGQV…AFIF), 227–247 (FVPY…AFSV), 252–272 (GLLI…WVLA), and 285–305 (FIIL…GVLI).

Belongs to the autoinducer-2 exporter (AI-2E) (TC 2.A.86) family.

It is found in the cell membrane. In Thermotoga maritima (strain ATCC 43589 / DSM 3109 / JCM 10099 / NBRC 100826 / MSB8), this protein is Putative transport protein TM_1187.